The primary structure comprises 216 residues: Cyclin-U4-2 (216 aa).

It belongs to the cyclin family. Cyclin U/P subfamily. Interacts with CDKA-1. Expressed in roots, stems and flowers. Expressed in the shoot apex, leaf primordia and young leaves.

This Arabidopsis thaliana (Mouse-ear cress) protein is Cyclin-U4-2 (CYCU4-2).